A 332-amino-acid polypeptide reads, in one-letter code: 2-oxoglutarate-dependent dioxygenase ecdK (332 aa).

One can recognise a Fe2OG dioxygenase domain in the interval 178–294 (HASELRLNHY…RRSVAFFLKP (117 aa)). Fe cation-binding residues include histidine 206, aspartate 208, and histidine 266. Arginine 285 provides a ligand contact to 2-oxoglutarate.

Belongs to the iron/ascorbate-dependent oxidoreductase family. Fe(2+) is required as a cofactor.

Its pathway is antifungal biosynthesis. 2-oxoglutarate-dependent dioxygenase; part of the gene cluster that mediates the biosynthesis of echinocandin B, a fungal lipidated cyclic hexapeptide that acts as an antifungal agent. Linoleoyl-AMP, produced by the fatty-acyl-AMP ligase ecdI, is transferred to the initiation carrier domain (T0) of ecdA. The linoleoyl-S-phosphopantetheinyl-T0 is sequentially extended with L-ornithine, L-threonine, L-proline, L-homotyrosine, L-threonine, and 4R-methyl-L-proline to form the linear hexapeptide. Thereafter, the terminal condensation (C7) performs macrocyclization of the NRPS product and the cyclic scaffold is released from ecdA. All six of the amino acid residues are hydroxylated, including 4R,5R-dihydroxy-L-ornithine, 4R-hydroxyl-L-proline, 3S,4S-dihydroxy-L-homotyrosine, and 3S-hydroxyl-4S-methyl-L-prolin. In the pathway, all the hydroxylation reactions are proposed to occur following completion of the cyclic peptide, so the unhydroxylated precursor produced by ecdA will undergo six rounds of hydroxylation. Five hydroxylase genes (ecdG, ecdH, ecdK, htyE and htyF) are embedded within the echinocandin B (ecd) and L-homotyrosine (hty) clusters. The protein is 2-oxoglutarate-dependent dioxygenase ecdK of Aspergillus rugulosus (Emericella rugulosa).